The primary structure comprises 433 residues: Glutamate-1-semialdehyde 2,1-aminomutase (433 aa).

Lys273 is subject to N6-(pyridoxal phosphate)lysine.

This sequence belongs to the class-III pyridoxal-phosphate-dependent aminotransferase family. HemL subfamily. Homodimer. The cofactor is pyridoxal 5'-phosphate.

It localises to the cytoplasm. The enzyme catalyses (S)-4-amino-5-oxopentanoate = 5-aminolevulinate. The protein operates within porphyrin-containing compound metabolism; protoporphyrin-IX biosynthesis; 5-aminolevulinate from L-glutamyl-tRNA(Glu): step 2/2. It functions in the pathway porphyrin-containing compound metabolism; chlorophyll biosynthesis. The chain is Glutamate-1-semialdehyde 2,1-aminomutase from Gloeothece citriformis (strain PCC 7424) (Cyanothece sp. (strain PCC 7424)).